Here is a 695-residue protein sequence, read N- to C-terminus: Elongation factor G (695 aa).

The region spanning 8–282 (EKTRNIGIMA…AVLDYLPAPT (275 aa)) is the tr-type G domain. GTP contacts are provided by residues 17-24 (AHIDAGKT), 81-85 (DTPGH), and 135-138 (NKMD).

It belongs to the TRAFAC class translation factor GTPase superfamily. Classic translation factor GTPase family. EF-G/EF-2 subfamily.

It localises to the cytoplasm. Its function is as follows. Catalyzes the GTP-dependent ribosomal translocation step during translation elongation. During this step, the ribosome changes from the pre-translocational (PRE) to the post-translocational (POST) state as the newly formed A-site-bound peptidyl-tRNA and P-site-bound deacylated tRNA move to the P and E sites, respectively. Catalyzes the coordinated movement of the two tRNA molecules, the mRNA and conformational changes in the ribosome. The polypeptide is Elongation factor G (Listeria welshimeri serovar 6b (strain ATCC 35897 / DSM 20650 / CCUG 15529 / CIP 8149 / NCTC 11857 / SLCC 5334 / V8)).